A 207-amino-acid chain; its full sequence is Peptidyl-prolyl cis-trans isomerase FKBP16-1, chloroplastic (207 aa).

Residues 104 to 207 (GDLVELNYVC…VFEIQLLKVL (104 aa)) form the PPIase FKBP-type domain.

The protein belongs to the FKBP-type PPIase family.

It localises to the plastid. The protein localises to the chloroplast thylakoid lumen. It carries out the reaction [protein]-peptidylproline (omega=180) = [protein]-peptidylproline (omega=0). Its function is as follows. PPIases accelerate the folding of proteins. It catalyzes the cis-trans isomerization of proline imidic peptide bonds in oligopeptides. The sequence is that of Peptidyl-prolyl cis-trans isomerase FKBP16-1, chloroplastic (FKBP16-1) from Arabidopsis thaliana (Mouse-ear cress).